A 440-amino-acid chain; its full sequence is Xaa-Pro dipeptidase (440 aa).

Aspartate 244, aspartate 255, histidine 335, glutamate 380, and glutamate 419 together coordinate Mn(2+).

It belongs to the peptidase M24B family. Bacterial-type prolidase subfamily. The cofactor is Mn(2+).

It catalyses the reaction Xaa-L-Pro dipeptide + H2O = an L-alpha-amino acid + L-proline. In terms of biological role, splits dipeptides with a prolyl residue in the C-terminal position. The sequence is that of Xaa-Pro dipeptidase from Shewanella pealeana (strain ATCC 700345 / ANG-SQ1).